Here is a 365-residue protein sequence, read N- to C-terminus: UDP-N-acetylglucosamine--N-acetylmuramyl-(pentapeptide) pyrophosphoryl-undecaprenol N-acetylglucosamine transferase (365 aa).

Residues Thr13–Gly15, Asn125, Arg165, Ser192, and Gln293 each bind UDP-N-acetyl-alpha-D-glucosamine.

It belongs to the glycosyltransferase 28 family. MurG subfamily.

The protein resides in the cell inner membrane. The catalysed reaction is di-trans,octa-cis-undecaprenyl diphospho-N-acetyl-alpha-D-muramoyl-L-alanyl-D-glutamyl-meso-2,6-diaminopimeloyl-D-alanyl-D-alanine + UDP-N-acetyl-alpha-D-glucosamine = di-trans,octa-cis-undecaprenyl diphospho-[N-acetyl-alpha-D-glucosaminyl-(1-&gt;4)]-N-acetyl-alpha-D-muramoyl-L-alanyl-D-glutamyl-meso-2,6-diaminopimeloyl-D-alanyl-D-alanine + UDP + H(+). It participates in cell wall biogenesis; peptidoglycan biosynthesis. Its function is as follows. Cell wall formation. Catalyzes the transfer of a GlcNAc subunit on undecaprenyl-pyrophosphoryl-MurNAc-pentapeptide (lipid intermediate I) to form undecaprenyl-pyrophosphoryl-MurNAc-(pentapeptide)GlcNAc (lipid intermediate II). In Ruegeria sp. (strain TM1040) (Silicibacter sp.), this protein is UDP-N-acetylglucosamine--N-acetylmuramyl-(pentapeptide) pyrophosphoryl-undecaprenol N-acetylglucosamine transferase.